A 1154-amino-acid chain; its full sequence is Voltage-gated inwardly rectifying potassium channel KCNH2 (1154 aa).

Residues 1-403 (MPVRRGHVAP…RIHRWTILHY (403 aa)) are Cytoplasmic-facing. The region spanning 41-70 (VIYCNDGFCELCGYSRAEVMQRPCTCDFLH) is the PAS domain. One can recognise a PAC domain in the interval 92 to 144 (RKVEIAFYRKDGSCFLCLVDVVPVKNEDGAVIMFILNFEVVMEKDMVGSPARD). Residues 233–312 (ALVGSGSPPA…ASTGAMHPLR (80 aa)) are disordered. Residue Ser239 is modified to Phosphoserine. A compositionally biased stretch (polar residues) spans 258–269 (PDGSGSSCSLAR). Ser283, Ser284, Ser320, and Ser351 each carry phosphoserine. Residues 404–424 (SPFKAVWDWLILLLVIYTAVF) form a helical membrane-spanning segment. At 425–450 (TPYSAAFLLKETEEGSQAPDCGYACQ) the chain is on the extracellular side. The chain crosses the membrane as a helical span at residues 451-471 (PLAVVDLIVDIMFIVDILINF). Residues 472-495 (RTTYVNANEEVVSHPGRIAVHYFK) are Cytoplasmic-facing. Residues 496-516 (GWFLIDMVAAIPFDLLIFGSG) form a helical membrane-spanning segment. Residues 517 to 520 (SEEL) are Extracellular-facing. Residues 521–541 (IGLLKTARLLRLVRVARKLDR) form a helical; Voltage-sensor membrane-spanning segment. Residues 542-547 (YSEYGA) lie on the Cytoplasmic side of the membrane. Residues 548 to 568 (AVLFLLMCTFALIAHWLACIW) form a helical membrane-spanning segment. The Extracellular portion of the chain corresponds to 569–611 (YAIGNMEQPNMDSHIGWLHNLGDQIGKPYNSSGLGGPSIKDKY). Positions 612–632 (VTALYFTFSSLTSVGFGNVSP) form an intramembrane region, pore-forming. Residues 624–629 (SVGFGN) carry the Selectivity filter motif. Residues 633-638 (NTNSEK) are Extracellular-facing. The chain crosses the membrane as a helical span at residues 639–659 (IFSICVMLIGSLMYASIFGNV). The Cytoplasmic portion of the chain corresponds to 660-1154 (SAIIQRLYSG…LHRHGSDPGS (495 aa)). Residues 742–842 (PFRGATKGCL…IHRDDLLEVL (101 aa)) form a cNMP-binding domain region. Positions 870–985 (GSPGSTELEG…DVEKSSDTCN (116 aa)) are disordered. Ser871 and Ser874 each carry phosphoserine. Over residues 883–892 (RQRKRKLSFR) the composition is skewed to basic residues. Positions 916–927 (GPSGRGQQGGPW) are enriched in gly residues. Residues 928-939 (GESLSSGPSSPE) show a composition bias toward low complexity. At Arg1014 the chain carries Omega-N-methylarginine. Residues 1037-1064 (RGDVESRLDALQRQLNRLETRLSADMAT) adopt a coiled-coil conformation. The disordered stretch occupies residues 1125–1154 (DGPARRLSLPGQLGALTSQPLHRHGSDPGS). Ser1132 is subject to Phosphoserine.

It belongs to the potassium channel family. H (Eag) (TC 1.A.1.20) subfamily. Kv11.1/KCNH2 sub-subfamily. The potassium channel is probably composed of a homo- or heterotetrameric complex of pore-forming alpha subunits that can associate with modulating beta subunits. Interacts with DNAJB12 and DNAJB14; chaperones DNAJB12 and DNAJB14 promote tetramerization. Heteromultimer with KCNH6/ERG2 and KCNH7/ERG3. Interacts with ALG10B. Forms a stable complex with KCNE1 or KCNE2, and that this heteromultimerization regulates Inward rectifier potassium channel activity. Interacts with CANX. The core-glycosylated, but not the fully glycosylated form interacts with RNF207. Interacts with NDFIP1 and NDFIP2; this interaction decreases the cell membrane expression by targeting KCNH2, through interaction with NEDD4L, for the degradation through the multivesicular bodies (MVBs)-lysosomal pathway. Phosphorylated on serine and threonine residues. Phosphorylation by PKA inhibits ion conduction.

The protein resides in the cell membrane. The enzyme catalyses K(+)(in) = K(+)(out). Functionally, pore-forming (alpha) subunit of voltage-gated inwardly rectifying potassium channel. Characterized by unusual gating kinetics by producing relatively small outward currents during membrane depolarization and large inward currents during subsequent repolarization which reflect a rapid inactivation during depolarization and quick recovery from inactivation but slow deactivation (closing) during repolarization. Channel properties are modulated by cAMP and subunit assembly. Forms a stable complex with KCNE1 or KCNE2, and that this heteromultimerization regulates inward rectifier potassium channel activity. This Sus scrofa (Pig) protein is Voltage-gated inwardly rectifying potassium channel KCNH2.